A 371-amino-acid polypeptide reads, in one-letter code: Heterodimeric geranylgeranyl pyrophosphate synthase large subunit 1, chloroplastic (371 aa).

A chloroplast-targeting transit peptide spans Met-1–Ser-51. N-acetylserine is present on Ser-52. Residues Lys-116, Arg-119, and His-148 each coordinate isopentenyl diphosphate. 2 residues coordinate Mg(2+): Asp-155 and Asp-161. Arg-166 contacts dimethylallyl diphosphate. Position 167 (Arg-167) interacts with isopentenyl diphosphate. Lys-256, Thr-257, Gln-294, Lys-311, and Lys-321 together coordinate dimethylallyl diphosphate.

Belongs to the FPP/GGPP synthase family. Forms homodimers. Part of a heterodimeric geranyl(geranyl)diphosphate synthase. Interacts with GGR. Requires Mg(2+) as cofactor. In terms of tissue distribution, expressed ubiquitously.

The protein resides in the plastid. The protein localises to the chloroplast. Its subcellular location is the cytoplasm. It carries out the reaction isopentenyl diphosphate + dimethylallyl diphosphate = (2E)-geranyl diphosphate + diphosphate. The enzyme catalyses isopentenyl diphosphate + (2E)-geranyl diphosphate = (2E,6E)-farnesyl diphosphate + diphosphate. It catalyses the reaction isopentenyl diphosphate + (2E,6E)-farnesyl diphosphate = (2E,6E,10E)-geranylgeranyl diphosphate + diphosphate. It functions in the pathway isoprenoid biosynthesis; farnesyl diphosphate biosynthesis; farnesyl diphosphate from geranyl diphosphate and isopentenyl diphosphate: step 1/1. It participates in isoprenoid biosynthesis; geranyl diphosphate biosynthesis; geranyl diphosphate from dimethylallyl diphosphate and isopentenyl diphosphate: step 1/1. Its pathway is isoprenoid biosynthesis; geranylgeranyl diphosphate biosynthesis; geranylgeranyl diphosphate from farnesyl diphosphate and isopentenyl diphosphate: step 1/1. Functionally, heterodimeric geranyl(geranyl)-diphosphate (GPP) synthase large subunit. In vitro, the large subunit catalyzes mainly the trans-addition of the three molecules of IPP onto DMAPP to form geranylgeranyl pyrophosphate while the small subunit alone is inactive. Upon association of the two subunits, the product profile changes and the production of gerany-diphosphate is strongly increased. This chain is Heterodimeric geranylgeranyl pyrophosphate synthase large subunit 1, chloroplastic (GGPPS1), found in Arabidopsis thaliana (Mouse-ear cress).